The following is a 440-amino-acid chain: MPKYYIITYGCQMNKSDSEKVAGILENLGYTPSEKMEEADIILLNTCSVRERAEEKVFGKLGELRKLKKRNQNLLIGIFGCMAQRMKEELIEKFPHVDFVLGSYKFTELPKILESLDGKKKVVLAEDIPSPQDVDFRVIKRENKFQAWIPIIYGCNNFCTYCIVPYLRGREKSRDPEEIIREVEYLASQGVVEVTLLGQNVDSYGKDLGNVDLADLLVEIHRIPRIKRIRFLTSHPRDVSDKLIRVVATHPKVCPHWHLPLQAGSDRILRRMGRGYTYSEYKALIEKIRAEIPKASFSTDIIVGFPGEEEEDFLATRRALEEIKFDTVNLAIYSKRPGTPAANYEDLIPYETKKRWFDELENLQRKIIYEKNLSRVGKEEIVLAEEVNPKNPRELSGRTENYRLVFFEAEKELIGKFLLVKITEARLWSLKGEVIREVDL.

In terms of domain architecture, MTTase N-terminal spans 2–118; that stretch reads PKYYIITYGC…LPKILESLDG (117 aa). Cys-11, Cys-47, Cys-81, Cys-155, Cys-159, and Cys-162 together coordinate [4Fe-4S] cluster. In terms of domain architecture, Radical SAM core spans 141–370; the sequence is RENKFQAWIP…ENLQRKIIYE (230 aa). One can recognise a TRAM domain in the interval 373–436; sequence LSRVGKEEIV…LWSLKGEVIR (64 aa).

Belongs to the methylthiotransferase family. MiaB subfamily. As to quaternary structure, monomer. The cofactor is [4Fe-4S] cluster.

The protein localises to the cytoplasm. It carries out the reaction N(6)-dimethylallyladenosine(37) in tRNA + (sulfur carrier)-SH + AH2 + 2 S-adenosyl-L-methionine = 2-methylsulfanyl-N(6)-dimethylallyladenosine(37) in tRNA + (sulfur carrier)-H + 5'-deoxyadenosine + L-methionine + A + S-adenosyl-L-homocysteine + 2 H(+). Catalyzes the methylthiolation of N6-(dimethylallyl)adenosine (i(6)A), leading to the formation of 2-methylthio-N6-(dimethylallyl)adenosine (ms(2)i(6)A) at position 37 in tRNAs that read codons beginning with uridine. The protein is tRNA-2-methylthio-N(6)-dimethylallyladenosine synthase of Dictyoglomus thermophilum (strain ATCC 35947 / DSM 3960 / H-6-12).